Consider the following 472-residue polypeptide: Doublesex- and mab-3-related transcription factor 3 (472 aa).

The DM DNA-binding region spans 29-76; it reads CARCRNHGVLSWLKGHKRYCRFKDCTCEKCILIIERQRVMAAQVALRR. 2 disordered regions span residues 89 to 128 and 155 to 191; these read DSLR…AELA and EERL…GCFT. Residues 95-123 are compositionally biased toward pro residues; sequence PGPPPPGDAVAAPQPPPASQPSQPQPPRP. Over residues 155 to 179 the composition is skewed to basic and acidic residues; the sequence is EERLGDGKSADNTEVFSDKDTDQRS. In terms of domain architecture, DMA spans 249–284; it reads RPPLEVLKKIFPNQKPTVLELILKGCGGDLVSAVEV. Residues 430-472 form a disordered region; it reads TEDPRISIPDDGCPFVSKQSIYTEDDYDERSDSSDSRTLNTSS.

Belongs to the DMRT family. In terms of assembly, may homodimerize. As to expression, expressed in testis.

The protein resides in the nucleus. Functionally, probable transcription factor that plays a role in configuring the spinal circuits controlling stride in vertebrates. Involved in neuronal specification within specific subdivision of spinal cord neurons and in the development of a coordinated locomotor network controlling limb movements. May regulate transcription during sexual development. This chain is Doublesex- and mab-3-related transcription factor 3 (DMRT3), found in Homo sapiens (Human).